Reading from the N-terminus, the 205-residue chain is Probable calcium-binding protein CML41 (205 aa).

Residues 26 to 55 are disordered; sequence SFQNRRRSPKSNSSSTLNSPRSNSDDNNNI. The segment covering 35–54 has biased composition (low complexity); the sequence is KSNSSSTLNSPRSNSDDNNN. 4 consecutive EF-hand domains span residues 60-95, 96-131, 137-173, and 174-205; these read ASKEELRQVFSHFDSDGDGKISAFELRHYFGSVGEY, ISHEAAQEAINEVDTDADGSLGFEDFVGLMTRRDLY, DGDGELKTAFEMFEVEKGSGCITPKGLQKMLVKLGES, and RTYGECEAMIKFYDIDGNGILDFHEFRQMMTV. Positions 73, 75, 77, 79, 84, 109, 111, 113, 115, and 120 each coordinate Ca(2+). Positions 187, 189, 191, and 198 each coordinate Ca(2+).

Its function is as follows. Potential calcium sensor. This is Probable calcium-binding protein CML41 (CML41) from Arabidopsis thaliana (Mouse-ear cress).